Consider the following 376-residue polypeptide: MGQQQSQSKDEMLFQEVSNNNVEGIKSLHHEGAGLEGVDKLGRTPLILACTNDDLYDVAKTLLELGSNVNAYRSGCNGGTPLHHAAKRGLVHTVKLLLSHGANPLVLDDDVKTALEVARDEGYSNVVRAIESHICLFSGCMREYSGSSLLNLFAPQLLSRKVWVVVVPTGSRNPTKPLKLELVLYDSIQDAQPRMVIPLWKANLEEPKSFRCDDSVMIIDDSRSPKSMRQRRESGFISQARRWAQVDRQIRLKLAAEIKGDMKQMNWFSEACKGVPQPMNPPRFMKTSQATTTTTNVPALSDDALTRVAMSLPSPKTANKEDGLCVICVDAPSEAVCVPCGHVAGCISCLKEIENKKMGCPVCRANIDQVIKLYHV.

ANK repeat units follow at residues 41 to 71 (LGRT…NVNA) and 77 to 106 (NGGT…NPLV). Residues 325-364 (CVICVDAPSEAVCVPCGHVAGCISCLKEIENKKMGCPVCR) form an RING-type zinc finger.

It carries out the reaction S-ubiquitinyl-[E2 ubiquitin-conjugating enzyme]-L-cysteine + [acceptor protein]-L-lysine = [E2 ubiquitin-conjugating enzyme]-L-cysteine + N(6)-ubiquitinyl-[acceptor protein]-L-lysine.. It participates in protein modification; protein ubiquitination. Its function is as follows. No E3 ubiquitin-protein ligase activity observed when associated with the E2 enzyme UBC8 in vitro. In Arabidopsis thaliana (Mouse-ear cress), this protein is Putative E3 ubiquitin-protein ligase XBAT34 (XBAT34).